Consider the following 493-residue polypeptide: Transcription termination factor MTERF5, chloroplastic (493 aa).

A chloroplast-targeting transit peptide spans 1-43 (MQSLSQLGPSEIFLVARREKPSTRAQLWFTGRLSFRQETNGIR).

Belongs to the mTERF family. In terms of assembly, interacts with pTAC6. As to expression, expressed in roots, rosette leaves, cauline leaves, stems, flower buds and open flowers.

The protein resides in the plastid. Its subcellular location is the chloroplast. In terms of biological role, transcription termination factor required for processing and steady-state levels of plastid transcripts. Involved also in chloroplast transcriptional pausing, a general feature of chloroplast genes. Specifically and positively regulates the transcription of chloroplast psbEFLJ encoding for photosystem II (PSII) core subunits psbE, psbF, psbL and psbJ; causes the plastid-encoded RNA polymerase (PEP) complex to pause at psbEFLJ by binding to the +30 to +51 region of double-stranded DNA, and recruits additional pTAC6 to the transcriptionally paused region of psbEFLJ. May play a role in response to abiotic stresses. The chain is Transcription termination factor MTERF5, chloroplastic from Arabidopsis thaliana (Mouse-ear cress).